A 93-amino-acid polypeptide reads, in one-letter code: UPF0223 protein YfdD (93 aa).

It belongs to the UPF0223 family.

In Lactococcus lactis subsp. lactis (strain IL1403) (Streptococcus lactis), this protein is UPF0223 protein YfdD (yfdD).